A 161-amino-acid polypeptide reads, in one-letter code: Urease accessory protein UreE (161 aa).

Belongs to the UreE family. Homodimer.

It is found in the cytoplasm. Involved in urease metallocenter assembly. Binds nickel. Probably functions as a nickel donor during metallocenter assembly. It is not essential for urease activity. The protein is Urease accessory protein UreE of Proteus mirabilis (strain HI4320).